We begin with the raw amino-acid sequence, 271 residues long: Formamidopyrimidine-DNA glycosylase (271 aa).

Pro2 functions as the Schiff-base intermediate with DNA in the catalytic mechanism. Glu3 serves as the catalytic Proton donor. Lys58 acts as the Proton donor; for beta-elimination activity in catalysis. Residues His92, Arg111, and Lys152 each coordinate DNA. The segment at 237-271 (YVYGKVQKPCKICNNIITLIRQNGRSTYFCNACQN) adopts an FPG-type zinc-finger fold. The active-site Proton donor; for delta-elimination activity is the Arg261.

The protein belongs to the FPG family. Monomer. Requires Zn(2+) as cofactor.

It carries out the reaction Hydrolysis of DNA containing ring-opened 7-methylguanine residues, releasing 2,6-diamino-4-hydroxy-5-(N-methyl)formamidopyrimidine.. It catalyses the reaction 2'-deoxyribonucleotide-(2'-deoxyribose 5'-phosphate)-2'-deoxyribonucleotide-DNA = a 3'-end 2'-deoxyribonucleotide-(2,3-dehydro-2,3-deoxyribose 5'-phosphate)-DNA + a 5'-end 5'-phospho-2'-deoxyribonucleoside-DNA + H(+). Involved in base excision repair of DNA damaged by oxidation or by mutagenic agents. Acts as a DNA glycosylase that recognizes and removes damaged bases. Has a preference for oxidized purines, such as 7,8-dihydro-8-oxoguanine (8-oxoG). Has AP (apurinic/apyrimidinic) lyase activity and introduces nicks in the DNA strand. Cleaves the DNA backbone by beta-delta elimination to generate a single-strand break at the site of the removed base with both 3'- and 5'-phosphates. The polypeptide is Formamidopyrimidine-DNA glycosylase (Wolbachia pipientis wMel).